We begin with the raw amino-acid sequence, 129 residues long: Small ribosomal subunit protein uS11 (129 aa).

This sequence belongs to the universal ribosomal protein uS11 family. Part of the 30S ribosomal subunit. Interacts with proteins S7 and S18. Binds to IF-3.

Its function is as follows. Located on the platform of the 30S subunit, it bridges several disparate RNA helices of the 16S rRNA. Forms part of the Shine-Dalgarno cleft in the 70S ribosome. The chain is Small ribosomal subunit protein uS11 from Idiomarina loihiensis (strain ATCC BAA-735 / DSM 15497 / L2-TR).